Here is a 255-residue protein sequence, read N- to C-terminus: 4-diphosphocytidyl-2-C-methyl-D-erythritol kinase (255 aa).

The active site involves Lys-6. 95–105 lines the ATP pocket; it reads PVCAGLGGGSS. Residue Asp-137 is part of the active site.

The protein belongs to the GHMP kinase family. IspE subfamily.

It carries out the reaction 4-CDP-2-C-methyl-D-erythritol + ATP = 4-CDP-2-C-methyl-D-erythritol 2-phosphate + ADP + H(+). The protein operates within isoprenoid biosynthesis; isopentenyl diphosphate biosynthesis via DXP pathway; isopentenyl diphosphate from 1-deoxy-D-xylulose 5-phosphate: step 3/6. Its function is as follows. Catalyzes the phosphorylation of the position 2 hydroxy group of 4-diphosphocytidyl-2C-methyl-D-erythritol. This Campylobacter jejuni subsp. jejuni serotype O:2 (strain ATCC 700819 / NCTC 11168) protein is 4-diphosphocytidyl-2-C-methyl-D-erythritol kinase.